The primary structure comprises 105 residues: Putative pterin-4-alpha-carbinolamine dehydratase (105 aa).

The protein belongs to the pterin-4-alpha-carbinolamine dehydratase family.

It carries out the reaction (4aS,6R)-4a-hydroxy-L-erythro-5,6,7,8-tetrahydrobiopterin = (6R)-L-erythro-6,7-dihydrobiopterin + H2O. This Sinorhizobium fredii (strain NBRC 101917 / NGR234) protein is Putative pterin-4-alpha-carbinolamine dehydratase.